A 321-amino-acid chain; its full sequence is Chlorohydroquinone/hydroquinone 1,2-dioxygenase (321 aa).

VOC domains are found at residues 10–138 (GLHH…IIEQ) and 160–282 (GFHS…ASVT). Residues His162, His229, and Glu278 each contribute to the Fe cation site.

It belongs to the extradiol ring-cleavage dioxygenase family. Fe(2+) serves as cofactor.

The enzyme catalyses hydroquinone + O2 = (2E,4Z)-4-hydroxy-6-oxohexa-2,4-dienoate + H(+). The catalysed reaction is chlorohydroquinone + O2 = 5-chlorocarbonyl-4-hydroxy-penta-2,4-dienoate + H(+). It participates in xenobiotic degradation; gamma-hexachlorocyclohexane degradation. Functionally, cleaves aromatic rings with two hydroxyl groups at para positions with consumption of O(2). Catalyzes the cleavage of chlorohydroquinone (CHQ), as part of the gamma-hexachlorocyclohexane (gamma-HCH or lindane) degradation pathway, producing 5-chlorocarbonyl-4-hydroxy-penta-2,4-dienoate as an intermediate product that can react with water yielding maleylacetate. This degradation pathway allows S.japonicum UT26 to grow on gamma-HCH as the sole source of carbon and energy. Can also use hydroquinone (HQ) as substrate, leading to gamma-hydroxymuconic semialdehyde. Is not able to convert catechol, contrary to meta-cleavage dioxygenases. This is Chlorohydroquinone/hydroquinone 1,2-dioxygenase from Sphingobium indicum (strain DSM 16413 / CCM 7287 / MTCC 6362 / UT26 / NBRC 101211 / UT26S) (Sphingobium japonicum).